Here is a 429-residue protein sequence, read N- to C-terminus: Ribosomal RNA small subunit methyltransferase B (429 aa).

Residues 254–260 (CAAPGGK), D277, D303, and D322 each bind S-adenosyl-L-methionine. C375 functions as the Nucleophile in the catalytic mechanism. Positions 397–419 (ALSETGTPDQPGQQNLPGGEEGD) are disordered. Positions 400-412 (ETGTPDQPGQQNL) are enriched in polar residues.

Belongs to the class I-like SAM-binding methyltransferase superfamily. RsmB/NOP family.

It is found in the cytoplasm. It carries out the reaction cytidine(967) in 16S rRNA + S-adenosyl-L-methionine = 5-methylcytidine(967) in 16S rRNA + S-adenosyl-L-homocysteine + H(+). Specifically methylates the cytosine at position 967 (m5C967) of 16S rRNA. This chain is Ribosomal RNA small subunit methyltransferase B, found in Salmonella typhi.